The chain runs to 185 residues: Ribosome-recycling factor (185 aa).

This sequence belongs to the RRF family.

Its subcellular location is the cytoplasm. Functionally, responsible for the release of ribosomes from messenger RNA at the termination of protein biosynthesis. May increase the efficiency of translation by recycling ribosomes from one round of translation to another. The chain is Ribosome-recycling factor from Erwinia tasmaniensis (strain DSM 17950 / CFBP 7177 / CIP 109463 / NCPPB 4357 / Et1/99).